A 237-amino-acid chain; its full sequence is Uridylate kinase (237 aa).

11–14 is an ATP binding site; sequence KLSG. Glycine 53 contacts UMP. 2 residues coordinate ATP: glycine 54 and arginine 58. UMP contacts are provided by residues aspartate 73 and 134–141; that span reads TGNPFFTT. ATP contacts are provided by threonine 161, tyrosine 167, and aspartate 170.

Belongs to the UMP kinase family. In terms of assembly, homohexamer.

The protein resides in the cytoplasm. The enzyme catalyses UMP + ATP = UDP + ADP. It participates in pyrimidine metabolism; CTP biosynthesis via de novo pathway; UDP from UMP (UMPK route): step 1/1. Inhibited by UTP. In terms of biological role, catalyzes the reversible phosphorylation of UMP to UDP. This chain is Uridylate kinase, found in Nitrosomonas europaea (strain ATCC 19718 / CIP 103999 / KCTC 2705 / NBRC 14298).